We begin with the raw amino-acid sequence, 407 residues long: F-box protein SKIP23 (407 aa).

Residues 2 to 50 (VDWSTLPKDLLDLISKSLESSFDLIQFRSVCSSWRSAAEPKSPLPTHHL) form the F-box domain.

As to quaternary structure, part of a SCF (ASK-cullin-F-box) protein ligase complex. Interacts with SKP1A/ASK1.

It localises to the nucleus. Its pathway is protein modification; protein ubiquitination. Component of SCF(ASK-cullin-F-box) E3 ubiquitin ligase complexes, which may mediate the ubiquitination and subsequent proteasomal degradation of target proteins. The protein is F-box protein SKIP23 (SKIP23) of Arabidopsis thaliana (Mouse-ear cress).